A 491-amino-acid polypeptide reads, in one-letter code: Nicotinamide phosphoribosyltransferase (491 aa).

The residue at position 1 (M1) is an N-acetylmethionine. At Y188 the chain carries Phosphotyrosine. R196 contacts diphosphate. D219 contacts beta-nicotinamide D-ribonucleotide. Diphosphate is bound by residues H247 and R311. Beta-nicotinamide D-ribonucleotide contacts are provided by residues 311–313 (RPD), 353–354 (GD), G384, and R392. S472 carries the phosphoserine modification.

It belongs to the NAPRTase family. Homodimer. In terms of tissue distribution, ubiquitously expressed in lymphoid and non-lymphoid tissues.

The protein resides in the nucleus. It localises to the cytoplasm. Its subcellular location is the secreted. The catalysed reaction is beta-nicotinamide D-ribonucleotide + diphosphate = 5-phospho-alpha-D-ribose 1-diphosphate + nicotinamide + H(+). It functions in the pathway cofactor biosynthesis; NAD(+) biosynthesis; nicotinamide D-ribonucleotide from 5-phospho-alpha-D-ribose 1-diphosphate and nicotinamide: step 1/1. Functionally, the secreted form behaves both as a cytokine with immunomodulating properties and an adipokine with anti-diabetic properties, it has no enzymatic activity, partly because of lack of activation by ATP, which has a low level in extracellular space and plasma. Catalyzes the condensation of nicotinamide with 5-phosphoribosyl-1-pyrophosphate to yield nicotinamide mononucleotide, an intermediate in the biosynthesis of NAD. It is the rate limiting component in the mammalian NAD biosynthesis pathway. Plays a role in the modulation of circadian clock function. NAMPT-dependent oscillatory production of NAD regulates oscillation of clock target gene expression by releasing the core clock component: CLOCK-BMAL1 heterodimer from NAD-dependent SIRT1-mediated suppression. This chain is Nicotinamide phosphoribosyltransferase (Nampt), found in Mus musculus (Mouse).